A 205-amino-acid polypeptide reads, in one-letter code: MLCPSTFQPHLSPFMDFHWPVRSLWPETRPLFFQFEQEMMRHMQEMRHNMEFMERLHQRIFDEIDHVSPMTTFKPISFQLGKEGSHYALTLDTQDFSPEELAVKQVGRKLRVSGKTEKKQDDGKGSYSYRCQEFRQEFDLPEDVNPESVSCSLNNGQLQIQAPREGNTVSNERVIPITYTPAVKNPALQNSEPENQAVEAEAAEN.

In terms of domain architecture, sHSP spans 67–180; it reads VSPMTTFKPI…NERVIPITYT (114 aa). Residues 184–205 form a disordered region; the sequence is KNPALQNSEPENQAVEAEAAEN. A compositionally biased stretch (low complexity) spans 192–205; sequence EPENQAVEAEAAEN.

The protein belongs to the small heat shock protein (HSP20) family. In terms of tissue distribution, expressed specifically in the rostral-most somites at 24 hpf. At 48 hpf, expression continues in the rostral-most somites and also in the notochord. Somite expression was restricted to the vicinity of the horizontal myoseptum. In adults, expressed in the heart.

This Danio rerio (Zebrafish) protein is Heat shock protein beta-11 (hspb11).